The sequence spans 312 residues: Acetyl-coenzyme A carboxylase carboxyl transferase subunit alpha (312 aa).

A CoA carboxyltransferase C-terminal domain is found at 32–286 (LLEERLARLR…KEALLKALEE (255 aa)).

The protein belongs to the AccA family. In terms of assembly, acetyl-CoA carboxylase is a heterohexamer composed of biotin carboxyl carrier protein (AccB), biotin carboxylase (AccC) and two subunits each of ACCase subunit alpha (AccA) and ACCase subunit beta (AccD).

It localises to the cytoplasm. The enzyme catalyses N(6)-carboxybiotinyl-L-lysyl-[protein] + acetyl-CoA = N(6)-biotinyl-L-lysyl-[protein] + malonyl-CoA. It participates in lipid metabolism; malonyl-CoA biosynthesis; malonyl-CoA from acetyl-CoA: step 1/1. Functionally, component of the acetyl coenzyme A carboxylase (ACC) complex. First, biotin carboxylase catalyzes the carboxylation of biotin on its carrier protein (BCCP) and then the CO(2) group is transferred by the carboxyltransferase to acetyl-CoA to form malonyl-CoA. This is Acetyl-coenzyme A carboxylase carboxyl transferase subunit alpha from Thermus thermophilus (strain ATCC BAA-163 / DSM 7039 / HB27).